A 310-amino-acid chain; its full sequence is Probable cell division protein WhiA (310 aa).

Residues 277–310 constitute a DNA-binding region (H-T-H motif); the sequence is SLKELAEQVPDGPISKSGVNHRLKKLHEIAENLR.

Belongs to the WhiA family.

Involved in cell division and chromosome segregation. The sequence is that of Probable cell division protein WhiA from Lactobacillus delbrueckii subsp. bulgaricus (strain ATCC 11842 / DSM 20081 / BCRC 10696 / JCM 1002 / NBRC 13953 / NCIMB 11778 / NCTC 12712 / WDCM 00102 / Lb 14).